Here is a 382-residue protein sequence, read N- to C-terminus: Zinc metalloproteinase nas-7 (382 aa).

Positions Met1–Gly18 are cleaved as a signal peptide. Residues His19–Arg79 constitute a propeptide that is removed on maturation. The Peptidase M12A domain maps to Asn80–Pro273. Cystine bridges form between Cys122/Cys272, Cys144/Cys163, Cys348/Cys382, Cys355/Cys375, and Cys362/Cys379. Residue His171 participates in Zn(2+) binding. The active site involves Glu172. The Zn(2+) site is built by His175 and His181. Residues Cys348 to Cys382 form the ShKT domain.

Zn(2+) is required as a cofactor. As to expression, expressed in the head of adult hermaphrodites but not within pharynx cells. Expressed in pharyngeal muscles, mc cells, intestine, hypodermal seam cells, arcade cells, spermatheca, vulva and rectal epithelial cells.

Its subcellular location is the secreted. Metalloprotease. This is Zinc metalloproteinase nas-7 (nas-7) from Caenorhabditis elegans.